The sequence spans 92 residues: Large ribosomal subunit protein eL43 (92 aa).

4 residues coordinate Zn(2+): C39, C42, C57, and C60. A C4-type zinc finger spans residues 39–60 (CPNCGEDRVDRQGTGIWQCSYC).

It belongs to the eukaryotic ribosomal protein eL43 family. Putative zinc-binding subfamily. In terms of assembly, part of the 50S ribosomal subunit. Contacts protein L2. Zn(2+) serves as cofactor.

Functionally, binds to the 23S rRNA. This chain is Large ribosomal subunit protein eL43, found in Haloarcula marismortui (strain ATCC 43049 / DSM 3752 / JCM 8966 / VKM B-1809) (Halobacterium marismortui).